The primary structure comprises 481 residues: Chromosomal replication initiator protein DnaA (481 aa).

Residues 1–71 (MTDLSAFWPQ…ETFAEDILGR (71 aa)) are domain I, interacts with DnaA modulators. Positions 71–143 (RPVTIELRIG…PAIGGGHEST (73 aa)) are domain II. Over residues 86 to 96 (ASAPAAASPRS) the composition is skewed to low complexity. The segment at 86–110 (ASAPAAASPRSPGRPAPAPVAATPT) is disordered. Residues 144–361 (RLNPAFTFES…GALKRVVAYS (218 aa)) are domain III, AAA+ region. 4 residues coordinate ATP: Gly189, Gly191, Lys192, and Thr193. Positions 362 to 481 (RFSNQPISLD…YAALQQMLRN (120 aa)) are domain IV, binds dsDNA.

Belongs to the DnaA family. In terms of assembly, oligomerizes as a right-handed, spiral filament on DNA at oriC.

The protein localises to the cytoplasm. In terms of biological role, plays an essential role in the initiation and regulation of chromosomal replication. ATP-DnaA binds to the origin of replication (oriC) to initiate formation of the DNA replication initiation complex once per cell cycle. Binds the DnaA box (a 9 base pair repeat at the origin) and separates the double-stranded (ds)DNA. Forms a right-handed helical filament on oriC DNA; dsDNA binds to the exterior of the filament while single-stranded (ss)DNA is stabiized in the filament's interior. The ATP-DnaA-oriC complex binds and stabilizes one strand of the AT-rich DNA unwinding element (DUE), permitting loading of DNA polymerase. After initiation quickly degrades to an ADP-DnaA complex that is not apt for DNA replication. Binds acidic phospholipids. This chain is Chromosomal replication initiator protein DnaA, found in Laribacter hongkongensis (strain HLHK9).